The sequence spans 299 residues: Bifunctional protein FolD (299 aa).

Residues 168-170 (GRS), Ser-193, and Ile-234 each bind NADP(+).

It belongs to the tetrahydrofolate dehydrogenase/cyclohydrolase family. As to quaternary structure, homodimer.

It catalyses the reaction (6R)-5,10-methylene-5,6,7,8-tetrahydrofolate + NADP(+) = (6R)-5,10-methenyltetrahydrofolate + NADPH. The catalysed reaction is (6R)-5,10-methenyltetrahydrofolate + H2O = (6R)-10-formyltetrahydrofolate + H(+). It functions in the pathway one-carbon metabolism; tetrahydrofolate interconversion. Its function is as follows. Catalyzes the oxidation of 5,10-methylenetetrahydrofolate to 5,10-methenyltetrahydrofolate and then the hydrolysis of 5,10-methenyltetrahydrofolate to 10-formyltetrahydrofolate. The polypeptide is Bifunctional protein FolD (Rhizobium johnstonii (strain DSM 114642 / LMG 32736 / 3841) (Rhizobium leguminosarum bv. viciae)).